Reading from the N-terminus, the 482-residue chain is Retrovirus-related Pol polyprotein from type-1 retrotransposable element R2 (482 aa).

One can recognise a Reverse transcriptase domain in the interval 1–84 (AYADDLILFA…DYFKYLGSRY (84 aa)). Positions 208 to 482 (QIPAVEKFYQ…ATGGRGRGDI (275 aa)) are nucleic acid-binding endonuclease.

It carries out the reaction DNA(n) + a 2'-deoxyribonucleoside 5'-triphosphate = DNA(n+1) + diphosphate. In Popillia japonica (Japanese beetle), this protein is Retrovirus-related Pol polyprotein from type-1 retrotransposable element R2.